Here is a 275-residue protein sequence, read N- to C-terminus: NH(3)-dependent NAD(+) synthetase (275 aa).

Residue 46–53 coordinates ATP; that stretch reads GISGGQDS. Asp52 lines the Mg(2+) pocket. Arg140 is a deamido-NAD(+) binding site. Thr160 lines the ATP pocket. Residue Glu165 participates in Mg(2+) binding. Lys173 and Asp180 together coordinate deamido-NAD(+). 2 residues coordinate ATP: Lys189 and Thr211. 260–261 contacts deamido-NAD(+); that stretch reads HK.

This sequence belongs to the NAD synthetase family. In terms of assembly, homodimer.

The catalysed reaction is deamido-NAD(+) + NH4(+) + ATP = AMP + diphosphate + NAD(+) + H(+). Its pathway is cofactor biosynthesis; NAD(+) biosynthesis; NAD(+) from deamido-NAD(+) (ammonia route): step 1/1. Catalyzes the ATP-dependent amidation of deamido-NAD to form NAD. Uses ammonia as a nitrogen source. This is NH(3)-dependent NAD(+) synthetase from Salmonella arizonae (strain ATCC BAA-731 / CDC346-86 / RSK2980).